A 402-amino-acid chain; its full sequence is 1-deoxy-D-xylulose 5-phosphate reductoisomerase (402 aa).

NADPH is bound by residues Thr-13, Gly-14, Ser-15, Ile-16, and Asn-126. A 1-deoxy-D-xylulose 5-phosphate-binding site is contributed by Lys-127. Residue Glu-128 participates in NADPH binding. Asp-152 serves as a coordination point for Mn(2+). Residues Ser-153, Glu-154, Ser-188, and His-211 each contribute to the 1-deoxy-D-xylulose 5-phosphate site. Glu-154 is a Mn(2+) binding site. Gly-217 is an NADPH binding site. The 1-deoxy-D-xylulose 5-phosphate site is built by Ser-224, Asn-229, Lys-230, and Glu-233. Position 233 (Glu-233) interacts with Mn(2+).

It belongs to the DXR family. The cofactor is Mg(2+). It depends on Mn(2+) as a cofactor.

The catalysed reaction is 2-C-methyl-D-erythritol 4-phosphate + NADP(+) = 1-deoxy-D-xylulose 5-phosphate + NADPH + H(+). It participates in isoprenoid biosynthesis; isopentenyl diphosphate biosynthesis via DXP pathway; isopentenyl diphosphate from 1-deoxy-D-xylulose 5-phosphate: step 1/6. Functionally, catalyzes the NADPH-dependent rearrangement and reduction of 1-deoxy-D-xylulose-5-phosphate (DXP) to 2-C-methyl-D-erythritol 4-phosphate (MEP). This Psychrobacter arcticus (strain DSM 17307 / VKM B-2377 / 273-4) protein is 1-deoxy-D-xylulose 5-phosphate reductoisomerase.